The chain runs to 197 residues: NADH-quinone oxidoreductase subunit C (197 aa).

It belongs to the complex I 30 kDa subunit family. In terms of assembly, NDH-1 is composed of 14 different subunits. Subunits NuoB, C, D, E, F, and G constitute the peripheral sector of the complex.

It is found in the cell inner membrane. The enzyme catalyses a quinone + NADH + 5 H(+)(in) = a quinol + NAD(+) + 4 H(+)(out). NDH-1 shuttles electrons from NADH, via FMN and iron-sulfur (Fe-S) centers, to quinones in the respiratory chain. The immediate electron acceptor for the enzyme in this species is believed to be ubiquinone. Couples the redox reaction to proton translocation (for every two electrons transferred, four hydrogen ions are translocated across the cytoplasmic membrane), and thus conserves the redox energy in a proton gradient. The chain is NADH-quinone oxidoreductase subunit C from Methylobacillus flagellatus (strain ATCC 51484 / DSM 6875 / VKM B-1610 / KT).